We begin with the raw amino-acid sequence, 318 residues long: Transaldolase (318 aa).

Residue Lys-131 is the Schiff-base intermediate with substrate of the active site.

The protein belongs to the transaldolase family. Type 1 subfamily. Homodimer.

The protein localises to the cytoplasm. The enzyme catalyses D-sedoheptulose 7-phosphate + D-glyceraldehyde 3-phosphate = D-erythrose 4-phosphate + beta-D-fructose 6-phosphate. It participates in carbohydrate degradation; pentose phosphate pathway; D-glyceraldehyde 3-phosphate and beta-D-fructose 6-phosphate from D-ribose 5-phosphate and D-xylulose 5-phosphate (non-oxidative stage): step 2/3. Functionally, transaldolase is important for the balance of metabolites in the pentose-phosphate pathway. The sequence is that of Transaldolase from Buchnera aphidicola subsp. Cinara cedri (strain Cc).